The sequence spans 275 residues: Small ribosomal subunit protein uS2 (275 aa).

The tract at residues 226 to 275 (AAAPNSASVREEEFSAEAGDEGKGRRAPAKKATEKKADAPAAAPEAPAAE) is disordered. Residues 264–275 (APAAAPEAPAAE) show a composition bias toward low complexity.

This sequence belongs to the universal ribosomal protein uS2 family.

This Xanthomonas campestris pv. campestris (strain ATCC 33913 / DSM 3586 / NCPPB 528 / LMG 568 / P 25) protein is Small ribosomal subunit protein uS2.